We begin with the raw amino-acid sequence, 309 residues long: Gamma-hemolysin component A (309 aa).

The N-terminal stretch at 1 to 29 (MIKNKILTATLAVGLIAPLANPFIEISKA) is a signal peptide.

The protein belongs to the aerolysin family. As to quaternary structure, toxicity requires sequential binding and synergistic association of a class S and a class F component which form heterooligomeric complexes. HlgA (class S) associates with HlgB (class F) thus forming an AB toxin in strains producing both gamma-hemolysins and leukocidins. HlgA and LukF-PV can also form a complex.

It localises to the secreted. In terms of biological role, toxin that seems to act by forming pores in the membrane of the cell. Has a hemolytic and a leucotoxic activity. This chain is Gamma-hemolysin component A (hlgA), found in Staphylococcus aureus (strain MRSA252).